Consider the following 320-residue polypeptide: Thiamine thiazole synthase (320 aa).

Substrate-binding positions include cysteine 82, 103–104, glycine 111, and valine 176; that span reads EA. Cysteine 209 bears the 2,3-didehydroalanine (Cys) mark. Residues aspartate 211, histidine 226, methionine 278, and 288–290 contribute to the substrate site; that span reads RMG.

Belongs to the THI4 family. Homooctamer. Requires Fe cation as cofactor. In terms of processing, during the catalytic reaction, a sulfide is transferred from Cys-209 to a reaction intermediate, generating a dehydroalanine residue.

It localises to the cytoplasm. Its subcellular location is the nucleus. It carries out the reaction [ADP-thiazole synthase]-L-cysteine + glycine + NAD(+) = [ADP-thiazole synthase]-dehydroalanine + ADP-5-ethyl-4-methylthiazole-2-carboxylate + nicotinamide + 3 H2O + 2 H(+). Functionally, involved in biosynthesis of the thiamine precursor thiazole. Catalyzes the conversion of NAD and glycine to adenosine diphosphate 5-(2-hydroxyethyl)-4-methylthiazole-2-carboxylic acid (ADT), an adenylated thiazole intermediate. The reaction includes an iron-dependent sulfide transfer from a conserved cysteine residue of the protein to a thiazole intermediate. The enzyme can only undergo a single turnover, which suggests it is a suicide enzyme. May have additional roles in adaptation to various stress conditions and in DNA damage tolerance. The protein is Thiamine thiazole synthase (sti35) of Fusarium oxysporum f. sp. lycopersici (strain 4287 / CBS 123668 / FGSC 9935 / NRRL 34936) (Fusarium vascular wilt of tomato).